The primary structure comprises 346 residues: D-alanine--D-alanine ligase (346 aa).

The 194-residue stretch at 133 to 326 (KFLAQKAGVK…LANSLPKERE (194 aa)) folds into the ATP-grasp domain. 159-209 (YPIILKPARLGSSIGVSVVHDDSELAYAKDVAFEFDKDVLVEPFIKGVKEY) serves as a coordination point for ATP. Mg(2+)-binding residues include Asp-282, Glu-294, and Asn-296.

It belongs to the D-alanine--D-alanine ligase family. Mg(2+) is required as a cofactor. The cofactor is Mn(2+).

The protein resides in the cytoplasm. The catalysed reaction is 2 D-alanine + ATP = D-alanyl-D-alanine + ADP + phosphate + H(+). The protein operates within cell wall biogenesis; peptidoglycan biosynthesis. Its function is as follows. Cell wall formation. The chain is D-alanine--D-alanine ligase from Campylobacter concisus (strain 13826).